The following is a 213-amino-acid chain: MAKLNVNPTRMELSKLKKRLTTSTRSHKLLKDKQDELMRQFINLVKYNNKLRKEVEDNLQGSLKDFVMARAVMSSEFLEEAIVYPKEHISVEVGEKNVMSVSVPVMNFKRQLEGDEGSIYPYGFANTSSELDDTLSKLYEILPQLLELAEVEKSCQLMANEIESTRRRVNALEYMTIPQLQETIKYIRMRLDENERSATTRLMKVKSMIEQRG.

It belongs to the V-ATPase D subunit family.

In terms of biological role, produces ATP from ADP in the presence of a proton gradient across the membrane. This Clostridium botulinum (strain Alaska E43 / Type E3) protein is V-type ATP synthase subunit D.